The primary structure comprises 119 residues: Dolichyl-diphosphooligosaccharide--protein glycosyltransferase subunit DAD1 (119 aa).

Residues 1-35 (MGKASHSSTAQDAVALFDSLRSAYSATPTTLKIID) are Cytoplasmic-facing. The chain crosses the membrane as a helical span at residues 36–56 (LYIGFAVSTALIQVVYMAIVG). At 57 to 59 (SFP) the chain is on the lumenal side. The helical transmembrane segment at 60–80 (FNSFLSGVLSCIGTAVLAVCL) threads the bilayer. Topologically, residues 81–98 (RIQVNKENKEFKDLAPER) are cytoplasmic. A helical transmembrane segment spans residues 99 to 119 (AFADFVLCNLVLHMVIMNFLG).

Belongs to the DAD/OST2 family. In terms of assembly, component of the oligosaccharyltransferase (OST) complex.

The protein resides in the endoplasmic reticulum membrane. It functions in the pathway protein modification; protein glycosylation. Its function is as follows. Subunit of the oligosaccharyl transferase (OST) complex that catalyzes the initial transfer of a defined glycan (Glc(3)Man(9)GlcNAc(2) in eukaryotes) from the lipid carrier dolichol-pyrophosphate to an asparagine residue within an Asn-X-Ser/Thr consensus motif in nascent polypeptide chains, the first step in protein N-glycosylation. N-glycosylation occurs cotranslationally and the complex associates with the Sec61 complex at the channel-forming translocon complex that mediates protein translocation across the endoplasmic reticulum (ER). All subunits are required for a maximal enzyme activity. In Malus domestica (Apple), this protein is Dolichyl-diphosphooligosaccharide--protein glycosyltransferase subunit DAD1 (DAD1).